Here is a 71-residue protein sequence, read N- to C-terminus: MPVIKVRENESFDVALRRFKRSCEKAGLLAEVRAREFYEKPTTIRKREKASLAKRHAKRNFRENARNTRLY.

The segment covering 48-59 has biased composition (basic residues); that stretch reads EKASLAKRHAKR. The tract at residues 48-71 is disordered; that stretch reads EKASLAKRHAKRNFRENARNTRLY. Residues 60–71 are compositionally biased toward basic and acidic residues; sequence NFRENARNTRLY.

Belongs to the bacterial ribosomal protein bS21 family.

This chain is Small ribosomal subunit protein bS21, found in Glaesserella parasuis serovar 5 (strain SH0165) (Haemophilus parasuis).